The following is a 348-amino-acid chain: Dihydroorotase (348 aa).

Residues His-14 and His-16 each coordinate Zn(2+). Substrate-binding positions include His-16–Arg-18 and Asn-42. The Zn(2+) site is built by Lys-100, His-137, and His-175. Lys-100 is modified (N6-carboxylysine). His-137 is a binding site for substrate. Substrate is bound at residue Leu-220. A Zn(2+)-binding site is contributed by Asp-248. Asp-248 is a catalytic residue. Positions 252 and 264 each coordinate substrate.

This sequence belongs to the metallo-dependent hydrolases superfamily. DHOase family. Class II DHOase subfamily. In terms of assembly, homodimer. Zn(2+) serves as cofactor.

It catalyses the reaction (S)-dihydroorotate + H2O = N-carbamoyl-L-aspartate + H(+). The protein operates within pyrimidine metabolism; UMP biosynthesis via de novo pathway; (S)-dihydroorotate from bicarbonate: step 3/3. Functionally, catalyzes the reversible cyclization of carbamoyl aspartate to dihydroorotate. The protein is Dihydroorotase of Pseudomonas entomophila (strain L48).